The sequence spans 191 residues: Ribosomal RNA small subunit methyltransferase G (191 aa).

S-adenosyl-L-methionine contacts are provided by residues Gly62, Leu67, Ile111–Glu112, and Arg124.

This sequence belongs to the methyltransferase superfamily. RNA methyltransferase RsmG family.

Its subcellular location is the cytoplasm. It catalyses the reaction guanosine(527) in 16S rRNA + S-adenosyl-L-methionine = N(7)-methylguanosine(527) in 16S rRNA + S-adenosyl-L-homocysteine. Specifically methylates the N7 position of guanine in position 527 of 16S rRNA. This is Ribosomal RNA small subunit methyltransferase G from Rickettsia rickettsii (strain Sheila Smith).